The primary structure comprises 518 residues: Cytochrome P450 1A1 (518 aa).

Positions 33–44 are mitochondrial targeting signal; it reads SKPRVPKGLKRL. The O-linked (GlcNAc) serine glycan is linked to Ser-71. Phe-228 lines the substrate pocket. Cys-461 contacts heme.

Belongs to the cytochrome P450 family. Interacts with cytosolic chaperones HSP70 and HSP90; this interaction is required for initial targeting to mitochondria. Interacts (via mitochondrial targeting signal) with TOMM40 (via N-terminus); this interaction is required for translocation across the mitochondrial outer membrane. It depends on heme as a cofactor.

The protein localises to the endoplasmic reticulum membrane. The protein resides in the mitochondrion inner membrane. It is found in the microsome membrane. Its subcellular location is the cytoplasm. It carries out the reaction an organic molecule + reduced [NADPH--hemoprotein reductase] + O2 = an alcohol + oxidized [NADPH--hemoprotein reductase] + H2O + H(+). It catalyses the reaction estrone + reduced [NADPH--hemoprotein reductase] + O2 = 2-hydroxyestrone + oxidized [NADPH--hemoprotein reductase] + H2O + H(+). The catalysed reaction is estrone + reduced [NADPH--hemoprotein reductase] + O2 = 4-hydroxyestrone + oxidized [NADPH--hemoprotein reductase] + H2O + H(+). The enzyme catalyses estrone + reduced [NADPH--hemoprotein reductase] + O2 = 6alpha-hydroxyestrone + oxidized [NADPH--hemoprotein reductase] + H2O + H(+). It carries out the reaction estrone + reduced [NADPH--hemoprotein reductase] + O2 = 15alpha-hydroxyestrone + oxidized [NADPH--hemoprotein reductase] + H2O + H(+). It catalyses the reaction estrone + reduced [NADPH--hemoprotein reductase] + O2 = 16alpha-hydroxyestrone + oxidized [NADPH--hemoprotein reductase] + H2O + H(+). The catalysed reaction is 17beta-estradiol + reduced [NADPH--hemoprotein reductase] + O2 = 2-hydroxy-17beta-estradiol + oxidized [NADPH--hemoprotein reductase] + H2O + H(+). The enzyme catalyses 17beta-estradiol + reduced [NADPH--hemoprotein reductase] + O2 = 4-hydroxy-17beta-estradiol + oxidized [NADPH--hemoprotein reductase] + H2O + H(+). It carries out the reaction 17beta-estradiol + reduced [NADPH--hemoprotein reductase] + O2 = 6alpha-hydroxy-17beta-estradiol + oxidized [NADPH--hemoprotein reductase] + H2O + H(+). It catalyses the reaction 17beta-estradiol + reduced [NADPH--hemoprotein reductase] + O2 = 7alpha-hydroxy-17beta-estradiol + oxidized [NADPH--hemoprotein reductase] + H2O + H(+). The catalysed reaction is 17beta-estradiol + reduced [NADPH--hemoprotein reductase] + O2 = 15alpha-hydroxy-17beta-estradiol + oxidized [NADPH--hemoprotein reductase] + H2O + H(+). The enzyme catalyses (5Z,8Z,11Z)-eicosatrienoate + reduced [NADPH--hemoprotein reductase] + O2 = 19-hydroxy-(5Z,8Z,11Z)-eicosatrienoate + oxidized [NADPH--hemoprotein reductase] + H2O + H(+). It carries out the reaction (5Z,8Z,11Z,14Z)-eicosatetraenoate + reduced [NADPH--hemoprotein reductase] + O2 = 16-hydroxy-(5Z,8Z,11Z,14Z)-eicosatetraenoate + oxidized [NADPH--hemoprotein reductase] + H2O + H(+). It catalyses the reaction (5Z,8Z,11Z,14Z)-eicosatetraenoate + reduced [NADPH--hemoprotein reductase] + O2 = 17-hydroxy-(5Z,8Z,11Z,14Z)-eicosatetraenoate + oxidized [NADPH--hemoprotein reductase] + H2O + H(+). The catalysed reaction is (5Z,8Z,11Z,14Z)-eicosatetraenoate + reduced [NADPH--hemoprotein reductase] + O2 = 18-hydroxy-(5Z,8Z,11Z,14Z)-eicosatetraenoate + oxidized [NADPH--hemoprotein reductase] + H2O + H(+). The enzyme catalyses (5Z,8Z,11Z,14Z)-eicosatetraenoate + reduced [NADPH--hemoprotein reductase] + O2 = 19-hydroxy-(5Z,8Z,11Z,14Z)-eicosatetraenoate + oxidized [NADPH--hemoprotein reductase] + H2O + H(+). It carries out the reaction (5Z,8Z,11Z,14Z,17Z)-eicosapentaenoate + reduced [NADPH--hemoprotein reductase] + O2 = 19-hydroxy-(5Z,8Z,11Z,14Z,17Z)-eicosapentaenoate + oxidized [NADPH--hemoprotein reductase] + H2O + H(+). It catalyses the reaction (5Z,8Z,11Z,14Z)-eicosatetraenoate + reduced [NADPH--hemoprotein reductase] + O2 = (8R,9S)-epoxy-(5Z,11Z,14Z)-eicosatrienoate + oxidized [NADPH--hemoprotein reductase] + H2O + H(+). The catalysed reaction is (5Z,8Z,11Z,14Z)-eicosatetraenoate + reduced [NADPH--hemoprotein reductase] + O2 = (11R,12S)-epoxy-(5Z,8Z,14Z)-eicosatrienoate + oxidized [NADPH--hemoprotein reductase] + H2O + H(+). The enzyme catalyses (5Z,8Z,11Z,14Z)-eicosatetraenoate + reduced [NADPH--hemoprotein reductase] + O2 = (14S,15R)-epoxy-(5Z,8Z,11Z)-eicosatrienoate + oxidized [NADPH--hemoprotein reductase] + H2O + H(+). It carries out the reaction (5Z,8Z,11Z,14Z)-eicosatetraenoate + reduced [NADPH--hemoprotein reductase] + O2 = (14R,15S)-epoxy-(5Z,8Z,11Z)-eicosatrienoate + oxidized [NADPH--hemoprotein reductase] + H2O + H(+). It catalyses the reaction (5Z,8Z,11Z,14Z,17Z)-eicosapentaenoate + reduced [NADPH--hemoprotein reductase] + O2 = (17R,18S)-epoxy-(5Z,8Z,11Z,14Z)-eicosatetraenoate + oxidized [NADPH--hemoprotein reductase] + H2O + H(+). The catalysed reaction is (4Z,7Z,10Z,13Z,16Z,19Z)-docosahexaenoate + reduced [NADPH--hemoprotein reductase] + O2 = (19S,20R)-epoxy-(4Z,7Z,10Z,13Z,16Z)-docosapentaenoate + oxidized [NADPH--hemoprotein reductase] + H2O + H(+). The enzyme catalyses (4Z,7Z,10Z,13Z,16Z,19Z)-docosahexaenoate + reduced [NADPH--hemoprotein reductase] + O2 = (19R,20S)-epoxy-(4Z,7Z,10Z,13Z,16Z)-docosapentaenoate + oxidized [NADPH--hemoprotein reductase] + H2O + H(+). It carries out the reaction all-trans-retinol + reduced [NADPH--hemoprotein reductase] + O2 = all-trans-retinal + oxidized [NADPH--hemoprotein reductase] + 2 H2O + H(+). It catalyses the reaction all-trans-retinal + reduced [NADPH--hemoprotein reductase] + O2 = all-trans-retinoate + oxidized [NADPH--hemoprotein reductase] + H2O + 2 H(+). The catalysed reaction is (13S)-hydroperoxy-(9Z,11E)-octadecadienoate = 13-oxo-(9Z,11E)-octadecadienoate + H2O. The enzyme catalyses (12S)-hydroperoxy-(5Z,8Z,10E,14Z)-eicosatetraenoate = 12-oxo-(5Z,8Z,10E,14Z)-eicosatetraenoate + H2O. It carries out the reaction (15S)-hydroperoxy-(5Z,8Z,11Z,13E)-eicosatetraenoate = 15-oxo-(5Z,8Z,11Z,13E)-eicosatetraenoate + H2O. It catalyses the reaction (5S)-hydroperoxy-(6E,8Z,11Z,14Z)-eicosatetraenoate = 5-oxo-(6E,8Z,11Z,14Z)-eicosatetraenoate + H2O. It functions in the pathway steroid hormone biosynthesis. It participates in lipid metabolism; fatty acid metabolism. Its pathway is cofactor metabolism; retinol metabolism. A cytochrome P450 monooxygenase involved in the metabolism of various endogenous substrates, including fatty acids, steroid hormones and vitamins. Mechanistically, uses molecular oxygen inserting one oxygen atom into a substrate, and reducing the second into a water molecule, with two electrons provided by NADPH via cytochrome P450 reductase (CPR; NADPH-ferrihemoprotein reductase). Catalyzes the hydroxylation of carbon-hydrogen bonds. Exhibits high catalytic activity for the formation of hydroxyestrogens from estrone (E1) and 17beta-estradiol (E2), namely 2-hydroxy E1 and E2, as well as D-ring hydroxylated E1 and E2 at the C15alpha and C16alpha positions. Displays different regioselectivities for polyunsaturated fatty acids (PUFA) hydroxylation. Catalyzes the epoxidation of double bonds of certain PUFA. Converts arachidonic acid toward epoxyeicosatrienoic acid (EET) regioisomers, 8,9-, 11,12-, and 14,15-EET, that function as lipid mediators in the vascular system. Displays an absolute stereoselectivity in the epoxidation of eicosapentaenoic acid (EPA) producing the 17(R),18(S) enantiomer. May play an important role in all-trans retinoic acid biosynthesis in extrahepatic tissues. Catalyzes two successive oxidative transformation of all-trans retinol to all-trans retinal and then to the active form all-trans retinoic acid. May also participate in eicosanoids metabolism by converting hydroperoxide species into oxo metabolites (lipoxygenase-like reaction, NADPH-independent). This Oryctolagus cuniculus (Rabbit) protein is Cytochrome P450 1A1 (CYP1A1).